Consider the following 375-residue polypeptide: Alcohol dehydrogenase 1 (375 aa).

Residue serine 2 is modified to N-acetylserine. 7 residues coordinate Zn(2+): cysteine 47, histidine 68, cysteine 98, cysteine 101, cysteine 104, cysteine 112, and cysteine 175. Residues 200 to 205, aspartate 224, and lysine 229 contribute to the NAD(+) site; that span reads GLGGVG. Lysine 234 is modified (N6-succinyllysine). 293 to 295 contacts NAD(+); that stretch reads VGV. Lysine 340 carries the post-translational modification N6-succinyllysine. Arginine 370 is a binding site for NAD(+).

This sequence belongs to the zinc-containing alcohol dehydrogenase family. Class-I subfamily. Dimer of identical or non-identical chains of three types (A, B, C), which are coded by 3 separate genes at different loci. Zn(2+) is required as a cofactor. In terms of tissue distribution, expressed at high levels in the liver, small intestine and eye, at moderate levels in kidney, ovary and uterus, and at low levels in the spinal cord, thymus, heart, stomach mucosa, skin and testis.

Its subcellular location is the cytoplasm. The catalysed reaction is a primary alcohol + NAD(+) = an aldehyde + NADH + H(+). It catalyses the reaction a secondary alcohol + NAD(+) = a ketone + NADH + H(+). The protein is Alcohol dehydrogenase 1 (Adh1) of Mus musculus (Mouse).